Consider the following 257-residue polypeptide: Imidazole glycerol phosphate synthase subunit HisF (257 aa).

Active-site residues include Asp11 and Asp130.

It belongs to the HisA/HisF family. In terms of assembly, heterodimer of HisH and HisF.

It localises to the cytoplasm. The enzyme catalyses 5-[(5-phospho-1-deoxy-D-ribulos-1-ylimino)methylamino]-1-(5-phospho-beta-D-ribosyl)imidazole-4-carboxamide + L-glutamine = D-erythro-1-(imidazol-4-yl)glycerol 3-phosphate + 5-amino-1-(5-phospho-beta-D-ribosyl)imidazole-4-carboxamide + L-glutamate + H(+). It participates in amino-acid biosynthesis; L-histidine biosynthesis; L-histidine from 5-phospho-alpha-D-ribose 1-diphosphate: step 5/9. In terms of biological role, IGPS catalyzes the conversion of PRFAR and glutamine to IGP, AICAR and glutamate. The HisF subunit catalyzes the cyclization activity that produces IGP and AICAR from PRFAR using the ammonia provided by the HisH subunit. This Bradyrhizobium diazoefficiens (strain JCM 10833 / BCRC 13528 / IAM 13628 / NBRC 14792 / USDA 110) protein is Imidazole glycerol phosphate synthase subunit HisF.